The chain runs to 314 residues: Probable cell division protein WhiA (314 aa).

A DNA-binding region (H-T-H motif) is located at residues 274–308 (SLKELGEMVSTGPISKSGVNHRLRKLNDLADKIRN).

The protein belongs to the WhiA family.

In terms of biological role, involved in cell division and chromosome segregation. The chain is Probable cell division protein WhiA from Staphylococcus aureus (strain USA300).